We begin with the raw amino-acid sequence, 226 residues long: N-(5'-phosphoribosyl)anthranilate isomerase (226 aa).

Belongs to the TrpF family.

The enzyme catalyses N-(5-phospho-beta-D-ribosyl)anthranilate = 1-(2-carboxyphenylamino)-1-deoxy-D-ribulose 5-phosphate. It functions in the pathway amino-acid biosynthesis; L-tryptophan biosynthesis; L-tryptophan from chorismate: step 3/5. In Synechococcus sp. (strain JA-3-3Ab) (Cyanobacteria bacterium Yellowstone A-Prime), this protein is N-(5'-phosphoribosyl)anthranilate isomerase.